Here is a 379-residue protein sequence, read N- to C-terminus: UDP-N-acetylglucosamine--N-acetylmuramyl-(pentapeptide) pyrophosphoryl-undecaprenol N-acetylglucosamine transferase (379 aa).

Residues 17–19, Asn128, Arg169, Ser197, and Gln298 each bind UDP-N-acetyl-alpha-D-glucosamine; that span reads TGG.

This sequence belongs to the glycosyltransferase 28 family. MurG subfamily.

It is found in the cell inner membrane. The enzyme catalyses di-trans,octa-cis-undecaprenyl diphospho-N-acetyl-alpha-D-muramoyl-L-alanyl-D-glutamyl-meso-2,6-diaminopimeloyl-D-alanyl-D-alanine + UDP-N-acetyl-alpha-D-glucosamine = di-trans,octa-cis-undecaprenyl diphospho-[N-acetyl-alpha-D-glucosaminyl-(1-&gt;4)]-N-acetyl-alpha-D-muramoyl-L-alanyl-D-glutamyl-meso-2,6-diaminopimeloyl-D-alanyl-D-alanine + UDP + H(+). It functions in the pathway cell wall biogenesis; peptidoglycan biosynthesis. Its function is as follows. Cell wall formation. Catalyzes the transfer of a GlcNAc subunit on undecaprenyl-pyrophosphoryl-MurNAc-pentapeptide (lipid intermediate I) to form undecaprenyl-pyrophosphoryl-MurNAc-(pentapeptide)GlcNAc (lipid intermediate II). This Brucella abortus (strain S19) protein is UDP-N-acetylglucosamine--N-acetylmuramyl-(pentapeptide) pyrophosphoryl-undecaprenol N-acetylglucosamine transferase.